The following is a 48-amino-acid chain: GNCKCDDEGPNVRTAPLTGYVDLGYCNEGWEKCASYYSPIAECCRKKK.

Cystine bridges form between cysteine 3–cysteine 43, cysteine 5–cysteine 33, and cysteine 26–cysteine 44.

Belongs to the sea anemone sodium channel inhibitory toxin family. Type II subfamily.

Its subcellular location is the secreted. It localises to the nematocyst. Functionally, binds specifically to voltage-gated sodium channels (Nav), thereby delaying their inactivation during signal transduction. Its toxicity is greater than that of RpII (AC P01534). The polypeptide is Delta-stichotoxin-Hmg4b (Heteractis magnifica (Magnificent sea anemone)).